The chain runs to 1088 residues: Exportin-T (1088 aa).

Low complexity predominate over residues 435–503 (KNNNNKNKNT…VKNANNIKNN (69 aa)). 2 disordered regions span residues 435–513 (KNNN…DDDD) and 1059–1088 (LNNN…KNGH).

Belongs to the exportin family.

Its subcellular location is the nucleus. It localises to the cytoplasm. Functionally, mediates the nuclear export of aminoacylated tRNAs. This chain is Exportin-T (xpot), found in Dictyostelium discoideum (Social amoeba).